A 436-amino-acid polypeptide reads, in one-letter code: Protein arginine methyltransferase NDUFAF7, mitochondrial (436 aa).

The transit peptide at 1–41 (MNALVRRCVARAGLPCIWRGKCYSSGNEPAESNQVTPMLRH) directs the protein to the mitochondrion. The tract at residues 411 to 436 (GSQERNACQSKTPSSSVAGFDELVWQ) is disordered. Residues 413–427 (QERNACQSKTPSSSV) are compositionally biased toward polar residues.

The protein belongs to the NDUFAF7 family. Interacts with NDUFS2.

It is found in the mitochondrion. It carries out the reaction L-arginyl-[protein] + 2 S-adenosyl-L-methionine = N(omega),N(omega)'-dimethyl-L-arginyl-[protein] + 2 S-adenosyl-L-homocysteine + 2 H(+). Its function is as follows. Arginine methyltransferase involved in the assembly or stability of mitochondrial NADH:ubiquinone oxidoreductase complex (complex I). Acts by mediating symmetric dimethylation of 'Arg-118' of NDUFS2 after it assembles into the complex I, stabilizing the early intermediate complex. The chain is Protein arginine methyltransferase NDUFAF7, mitochondrial from Mus musculus (Mouse).